Consider the following 94-residue polypeptide: Small ribosomal subunit protein uS19c (94 aa).

This sequence belongs to the universal ribosomal protein uS19 family.

It is found in the plastid. It localises to the chloroplast. In terms of biological role, protein S19 forms a complex with S13 that binds strongly to the 16S ribosomal RNA. The sequence is that of Small ribosomal subunit protein uS19c from Cyanidioschyzon merolae (strain NIES-3377 / 10D) (Unicellular red alga).